Consider the following 470-residue polypeptide: ATP synthase subunit beta (470 aa).

157 to 164 (GGAGVGKT) serves as a coordination point for ATP.

This sequence belongs to the ATPase alpha/beta chains family. As to quaternary structure, F-type ATPases have 2 components, CF(1) - the catalytic core - and CF(0) - the membrane proton channel. CF(1) has five subunits: alpha(3), beta(3), gamma(1), delta(1), epsilon(1). CF(0) has three main subunits: a(1), b(2) and c(9-12). The alpha and beta chains form an alternating ring which encloses part of the gamma chain. CF(1) is attached to CF(0) by a central stalk formed by the gamma and epsilon chains, while a peripheral stalk is formed by the delta and b chains.

It localises to the cell inner membrane. The catalysed reaction is ATP + H2O + 4 H(+)(in) = ADP + phosphate + 5 H(+)(out). Produces ATP from ADP in the presence of a proton gradient across the membrane. The catalytic sites are hosted primarily by the beta subunits. The sequence is that of ATP synthase subunit beta from Geobacter sp. (strain M21).